An 872-amino-acid chain; its full sequence is DNA polymerase 1 (872 aa).

It belongs to the DNA polymerase type-B family.

The catalysed reaction is DNA(n) + a 2'-deoxyribonucleoside 5'-triphosphate = DNA(n+1) + diphosphate. The sequence is that of DNA polymerase 1 (pol-alpha) from Sulfurisphaera ohwakuensis.